The sequence spans 306 residues: sn-1-specific diacylglycerol lipase ABHD11 (306 aa).

The tract at residues 19–40 is disordered; the sequence is GPSFARVPVAPSSSSGGRGGAE. The segment covering 23–33 has biased composition (low complexity); that stretch reads ARVPVAPSSSS. At K78 the chain carries N6-succinyllysine. Active-site charge relay system residues include S132, D228, and H287.

It belongs to the AB hydrolase superfamily. As to quaternary structure, interacts with OGDH and DLST; this interaction maintains the functional lipoylation of the 2-oxoglutarate dehydrogenase complex. In terms of processing, phosphorylated. In terms of tissue distribution, ubiquitously expressed. Highly expressed in small intestine, prostate and thyroid, while aorta and colon tissues exhibit weak expression levels.

The protein localises to the mitochondrion. It is found in the mitochondrion matrix. The enzyme catalyses 1-octadecanoyl-2-(5Z,8Z,11Z,14Z-eicosatetraenoyl)-sn-glycerol + H2O = 2-(5Z,8Z,11Z,14Z-eicosatetraenoyl)-glycerol + octadecanoate + H(+). It catalyses the reaction a 1,2-diacyl-sn-glycerol + H2O = a 2-acylglycerol + a fatty acid + H(+). The catalysed reaction is a 1,3-diacyl-sn-glycerol + H2O = a 1-acyl-sn-glycerol + a fatty acid + H(+). It carries out the reaction 1-octadecanoyl-2-(9Z-octadecenoyl)-sn-glycerol + H2O = 2-(9Z-octadecenoyl)-glycerol + octadecanoate + H(+). The enzyme catalyses 1-octadecanoyl-2-(4Z,7Z,10Z,13Z,16Z,19Z-docosahexaenoyl)-sn-glycerol + H2O = 2-(4Z,7Z,10Z,13Z,16Z,19Z-docosahexaenoyl)-glycerol + octadecanoate + H(+). It catalyses the reaction 1,2-didecanoylglycerol + H2O = decanoylglycerol + decanoate + H(+). Catalyzes the hydrolysis of diacylglycerol in vitro and may function as a key regulator in lipid metabolism, namely by regulating the intracellular levels of diacylglycerol. 1,2-diacyl-sn-glycerols are the preferred substrate over 1,3-diacyl-sn-glycerols. The enzyme hydrolyzes stearate in preference to palmitate from the sn-1 position of 1,2-diacyl-sn-glycerols. Maintains the functional lipoylation of the 2-oxoglutarate dehydrogenase complex (OGDHc) through its interaction with the OGDHc by preventing the formation of lipoyl adducts. In addition, is also required for the expansion and differentiation of embryonic stem cells (ESCs). This chain is sn-1-specific diacylglycerol lipase ABHD11, found in Homo sapiens (Human).